A 107-amino-acid chain; its full sequence is Putative double-stranded DNA mimic protein Asuc_1259 (107 aa).

It belongs to the putative dsDNA mimic protein family.

Its function is as follows. May act as a double-stranded DNA (dsDNA) mimic. Probably regulates the activity of a dsDNA-binding protein. The chain is Putative double-stranded DNA mimic protein Asuc_1259 from Actinobacillus succinogenes (strain ATCC 55618 / DSM 22257 / CCUG 43843 / 130Z).